The following is a 474-amino-acid chain: Putative pectinesterase/pectinesterase inhibitor 38 (474 aa).

The pectinesterase inhibitor 38 stretch occupies residues Met-1–Val-130. N-linked (GlcNAc...) asparagine glycosylation is present at Asn-80. The segment at Asp-164–Ser-461 is pectinesterase 38. The substrate site is built by Thr-241 and Gln-271. Asp-294 serves as the catalytic Proton donor; for pectinesterase activity. A disulfide bond links Cys-308 and Cys-328. Asp-315 acts as the Nucleophile; for pectinesterase activity in catalysis. A glycan (N-linked (GlcNAc...) asparagine) is linked at Asn-351. Arg-380 and Trp-382 together coordinate substrate. A glycan (N-linked (GlcNAc...) asparagine) is linked at Asn-409.

In the N-terminal section; belongs to the PMEI family. This sequence in the C-terminal section; belongs to the pectinesterase family.

The protein resides in the secreted. Its subcellular location is the cell wall. The catalysed reaction is [(1-&gt;4)-alpha-D-galacturonosyl methyl ester](n) + n H2O = [(1-&gt;4)-alpha-D-galacturonosyl](n) + n methanol + n H(+). It participates in glycan metabolism; pectin degradation; 2-dehydro-3-deoxy-D-gluconate from pectin: step 1/5. In terms of biological role, acts in the modification of cell walls via demethylesterification of cell wall pectin. The chain is Putative pectinesterase/pectinesterase inhibitor 38 (PME38) from Arabidopsis thaliana (Mouse-ear cress).